A 352-amino-acid chain; its full sequence is Selenide, water dikinase (352 aa).

Cys23 is a catalytic residue. ATP is bound by residues Lys26 and 54 to 56 (SRD). Residue Asp57 participates in Mg(2+) binding. Residues Asp74, Asp97, and 145 to 147 (GHS) contribute to the ATP site. Asp97 contacts Mg(2+). Asp233 serves as a coordination point for Mg(2+).

It belongs to the selenophosphate synthase 1 family. Class I subfamily. As to quaternary structure, homodimer. It depends on Mg(2+) as a cofactor.

The catalysed reaction is hydrogenselenide + ATP + H2O = selenophosphate + AMP + phosphate + 2 H(+). Functionally, synthesizes selenophosphate from selenide and ATP. The sequence is that of Selenide, water dikinase from Shewanella sp. (strain ANA-3).